The sequence spans 185 residues: Crossover junction endodeoxyribonuclease RuvC (185 aa).

Active-site residues include Asp-7, Glu-68, and Asp-141. Asp-7, Glu-68, and Asp-141 together coordinate Mg(2+).

It belongs to the RuvC family. Homodimer which binds Holliday junction (HJ) DNA. The HJ becomes 2-fold symmetrical on binding to RuvC with unstacked arms; it has a different conformation from HJ DNA in complex with RuvA. In the full resolvosome a probable DNA-RuvA(4)-RuvB(12)-RuvC(2) complex forms which resolves the HJ. Mg(2+) serves as cofactor.

The protein resides in the cytoplasm. It carries out the reaction Endonucleolytic cleavage at a junction such as a reciprocal single-stranded crossover between two homologous DNA duplexes (Holliday junction).. In terms of biological role, the RuvA-RuvB-RuvC complex processes Holliday junction (HJ) DNA during genetic recombination and DNA repair. Endonuclease that resolves HJ intermediates. Cleaves cruciform DNA by making single-stranded nicks across the HJ at symmetrical positions within the homologous arms, yielding a 5'-phosphate and a 3'-hydroxyl group; requires a central core of homology in the junction. The consensus cleavage sequence is 5'-(A/T)TT(C/G)-3'. Cleavage occurs on the 3'-side of the TT dinucleotide at the point of strand exchange. HJ branch migration catalyzed by RuvA-RuvB allows RuvC to scan DNA until it finds its consensus sequence, where it cleaves and resolves the cruciform DNA. The chain is Crossover junction endodeoxyribonuclease RuvC from Mycolicibacterium smegmatis (strain ATCC 700084 / mc(2)155) (Mycobacterium smegmatis).